A 1007-amino-acid chain; its full sequence is Glutamate receptor ionotropic, delta-2 (1007 aa).

Positions 1-23 are cleaved as a signal peptide; the sequence is MEVFPFLLVLSVWWSRTWDSANA. The tract at residues 24–345 is interaction with CBLN1 homotrimer; it reads DSIIHIGAIF…NAFHKKLEDR (322 aa). The Extracellular portion of the chain corresponds to 24-566; the sequence is DSIIHIGAIF…DMFACLAPFD (543 aa). Disulfide bonds link C83–C355, C99–C131, and C298–C310. A glycan (N-linked (GlcNAc...) asparagine) is linked at N293. Residue N426 is glycosylated (N-linked (GlcNAc...) asparagine). Positions 531, 534, and 535 each coordinate Ca(2+). Residues 567–587 traverse the membrane as a helical segment; it reads LSLWACIAGTVLLVGLLVYLL. The Cytoplasmic segment spans residues 588–635; the sequence is NWLNPPRLQMGSMTSTTLYNSMWFVYGSFVQQGGEVPYTTLATRMMMG. Residues 636–656 traverse the membrane as a helical segment; the sequence is AWWLFALIVISSYTANLAAFL. Topologically, residues 657–830 are extracellular; it reads TITRIESSIQ…QKGGALDIKS (174 aa). Residues N713 and N716 are each glycosylated (N-linked (GlcNAc...) asparagine). The Ca(2+) site is built by D753, D755, and S757. Residues 831 to 851 form a helical membrane-spanning segment; sequence FAGVFCILAAGIVLSCFIAML. Over 852-1007 the chain is Cytoplasmic; that stretch reads ETWWNKRKGS…GNDPDRGTSI (156 aa). Position 883 is a phosphoserine (S883). Position 886 is a phosphothreonine (T886). S890 bears the Phosphoserine mark. The segment at 921–991 is interaction with AP4M1; it reads DFRNTHITTT…MSSIPYQPTP (71 aa). Residues 1005 to 1007 carry the PDZ-binding motif; that stretch reads TSI. Residue S1006 is modified to Phosphoserine.

Belongs to the glutamate-gated ion channel (TC 1.A.10.1) family. GRID2 subfamily. Tetramer; dimer of dimers. Interacts with EML2, MAGI2 (via PDZ domains) and AP4M1. Interacts with BECN1, GOPC, GRID2IP, SHANK1 and SHANK2. Interacts with CBLN2, but not with CBLN4. Interacts with CBLN1 (via C1q domain); the interaction is CBLN1-NRX1 complex formation-dependent; CBLN1-binding is calcium-independent; CBLN1 hexamers anchor GRID2 N-terminal domain dimers to monomeric NRXN1 isoform beta; promotes synaptogenesis and mediates the D-Serine-dependent long term depression signals and AMPA receptor endocytosis.

The protein resides in the postsynaptic cell membrane. The enzyme catalyses Ca(2+)(in) = Ca(2+)(out). The catalysed reaction is Na(+)(in) = Na(+)(out). Member of the ionotropic glutamate receptor family, which plays a crucial role in synaptic organization and signal transduction in the central nervous system. Although it shares structural features with ionotropic glutamate receptors, does not bind glutamate as a primary ligand. Promotes synaptogenesis and mediates the D-Serine-dependent long term depression signals and AMPA receptor endocytosis of cerebellar parallel fiber-Purkinje cell (PF-PC) synapses through the NRX1B-CBLN1-GRID2 triad complex. In the presence of neurexins and cerebellins, forms cation-selective channels that are proposed to be gated by glycine and D-serine. However, recent research disputes this ligand-gated cation channel activity. Cation-selective ion channel activity can be triggered by GRM1 in Purkinje cells. This chain is Glutamate receptor ionotropic, delta-2 (GRID2), found in Homo sapiens (Human).